The following is a 366-amino-acid chain: Phenylalanine dehydrogenase (366 aa).

Arg-45 contributes to the NAD(+) binding site. Lys-69 is an L-phenylalanine binding site. Lys-81 is an active-site residue. Residues Asp-116, Thr-151, 181-187 (GVGKVGE), 204-205 (DI), 241-242 (AK), and 262-264 (SAN) contribute to the NAD(+) site. L-phenylalanine is bound at residue Asn-264.

It belongs to the Glu/Leu/Phe/Val dehydrogenases family.

It carries out the reaction L-phenylalanine + NAD(+) + H2O = 3-phenylpyruvate + NH4(+) + NADH + H(+). The protein operates within amino-acid biosynthesis; L-phenylalanine biosynthesis; L-phenylalanine from phenylpyruvate (PDH route): step 1/1. In terms of biological role, catalyzes the reversible NAD(+)-dependent oxidative deamination of L-phenylalanine to phenylpyruvate. This is Phenylalanine dehydrogenase from Thermoactinomyces intermedius.